Here is a 609-residue protein sequence, read N- to C-terminus: Aspartate--tRNA(Asp/Asn) ligase (609 aa).

L-aspartate is bound at residue glutamate 175. The aspartate stretch occupies residues 199–202 (QQFK). L-aspartate is bound by residues arginine 221 and histidine 468. 221–223 (RDE) is an ATP binding site. Glutamate 502 serves as a coordination point for ATP. Arginine 509 contacts L-aspartate. An ATP-binding site is contributed by 554-557 (GIDR).

It belongs to the class-II aminoacyl-tRNA synthetase family. Type 1 subfamily. In terms of assembly, homodimer.

It is found in the cytoplasm. It carries out the reaction tRNA(Asx) + L-aspartate + ATP = L-aspartyl-tRNA(Asx) + AMP + diphosphate. In terms of biological role, aspartyl-tRNA synthetase with relaxed tRNA specificity since it is able to aspartylate not only its cognate tRNA(Asp) but also tRNA(Asn). Reaction proceeds in two steps: L-aspartate is first activated by ATP to form Asp-AMP and then transferred to the acceptor end of tRNA(Asp/Asn). This is Aspartate--tRNA(Asp/Asn) ligase from Caulobacter sp. (strain K31).